Reading from the N-terminus, the 512-residue chain is Serine--tRNA ligase, cytoplasmic (512 aa).

Met-1 is subject to N-acetylmethionine. The interval 9 to 61 (RVDKGGDPALIRETQEKRFKDPGLVDQLVKADSEWRRCRFRADNLNKLKNLCS) is interaction with tRNA. Ser-241 is subject to Phosphoserine. L-serine-binding residues include Thr-271 and Arg-302. ATP-binding positions include 302–304 (RQE) and 318–321 (VHQF). N6-acetyllysine is present on Lys-323. Residue Glu-325 coordinates L-serine. 391 to 394 (ELVS) contacts ATP. Asn-427 provides a ligand contact to L-serine. The interval 472-512 (KPAPIDQEPSKKQKKQHEGSKKKAKEVTLENQLQNMEVTEA) is disordered. Residues 479 to 499 (EPSKKQKKQHEGSKKKAKEVT) show a composition bias toward basic and acidic residues. The short motif at 482 to 494 (KKQKKQHEGSKKK) is the Nuclear localization signal element. The span at 500-512 (LENQLQNMEVTEA) shows a compositional bias: polar residues.

The protein belongs to the class-II aminoacyl-tRNA synthetase family. Type-1 seryl-tRNA synthetase subfamily. In terms of assembly, homodimer. The tRNA molecule may bind across the dimer. Interacts with SIRT2. Interacts with METTL6; interaction is required for the tRNA N(3)-methylcytidine methyltransferase activity of METTL6.

The protein localises to the cytoplasm. The protein resides in the nucleus. It carries out the reaction tRNA(Ser) + L-serine + ATP = L-seryl-tRNA(Ser) + AMP + diphosphate + H(+). It catalyses the reaction tRNA(Sec) + L-serine + ATP = L-seryl-tRNA(Sec) + AMP + diphosphate + H(+). It participates in aminoacyl-tRNA biosynthesis; selenocysteinyl-tRNA(Sec) biosynthesis; L-seryl-tRNA(Sec) from L-serine and tRNA(Sec): step 1/1. In terms of biological role, catalyzes the attachment of serine to tRNA(Ser) in a two-step reaction: serine is first activated by ATP to form Ser-AMP and then transferred to the acceptor end of tRNA(Ser). Is probably also able to aminoacylate tRNA(Sec) with serine, to form the misacylated tRNA L-seryl-tRNA(Sec), which will be further converted into selenocysteinyl-tRNA(Sec). In the nucleus, binds to the VEGFA core promoter and prevents MYC binding and transcriptional activation by MYC. Recruits SIRT2 to the VEGFA promoter, promoting deacetylation of histone H4 at 'Lys-16' (H4K16). Thereby, inhibits the production of VEGFA and sprouting angiogenesis mediated by VEGFA. This Rattus norvegicus (Rat) protein is Serine--tRNA ligase, cytoplasmic (Sars1).